The primary structure comprises 168 residues: Outer-membrane lipoprotein YfiB (168 aa).

The signal sequence occupies residues 1 to 25; it reads MLPQRLHPSRLLALALFSLVLGLAG. C26 carries N-palmitoyl cysteine lipidation. The S-diacylglycerol cysteine moiety is linked to residue C26. Positions 53 to 168 constitute an OmpA-like domain; that stretch reads EGWEFGMSSK…RRVAIIVPAE (116 aa).

Belongs to the outer membrane OOP (TC 1.B.6) superfamily. Homodimer. Interacts with YfiR. The YfiB-YfiR complex is a 2:2 heterotetramer.

It is found in the cell outer membrane. Both lipid anchor in the outer membrane and peptidoglycan binding are required for full activity. Once activated by certain cell stress, the dimeric YfiB transforms from a compact conformation to a stretched conformation, allowing the periplasmic domain of the membrane-anchored YfiB to penetrate the cell wall and sequester the YfiR dimer. GMP enhances the binding affinity between YfiB and YfiR. Functionally, activates the diguanylate cyclase TpbB/YfiN by sequestering YfiR at the outer membrane, which counteracts the YfiR-mediated repression of TpbB/YfiN at the inner membrane and leads to increased c-di-GMP production. May act as a sensor of envelope stress. Part of the YfiB-TpbB-YfiR (or yfiBNR) system, encoding a tripartite signaling module that modulates intracellular c-di-GMP levels. The system is a key regulator of the small colony variant (SCV) phenotype, and plays an important role in biofilm formation and in vivo persistence. The c-di-GMP produced by TpbB/YfiN stimulates the production of the Pel and Psl exopolysaccharides, which promotes surface attachment, generates an SCV phenotype and confers resistance against phagocytosis. This Pseudomonas aeruginosa (strain ATCC 15692 / DSM 22644 / CIP 104116 / JCM 14847 / LMG 12228 / 1C / PRS 101 / PAO1) protein is Outer-membrane lipoprotein YfiB.